The chain runs to 772 residues: Polyribonucleotide nucleotidyltransferase (772 aa).

Residues D488 and D494 each contribute to the Mg(2+) site. A KH domain is found at 555-614 (PRLTTLKINPEKIRDVIGKGGAVIRGLQEETGTTINIDEDGTITIASTDPEKAEFAKKRI). In terms of domain architecture, S1 motif spans 624–692 (GKVYEGPVTK…EKGRVKLSMK (69 aa)). Positions 690-772 (SMKALTERPA…QPYAPRDSQE (83 aa)) are disordered. Residues 703–740 (YSERPPREDRGDRGDRGGERRERSDRGDRGGDRGERAP) show a composition bias toward basic and acidic residues. Residues 743-757 (NSEQQQQPRSNEQQP) are compositionally biased toward low complexity.

The protein belongs to the polyribonucleotide nucleotidyltransferase family. Requires Mg(2+) as cofactor.

It is found in the cytoplasm. It carries out the reaction RNA(n+1) + phosphate = RNA(n) + a ribonucleoside 5'-diphosphate. Involved in mRNA degradation. Catalyzes the phosphorolysis of single-stranded polyribonucleotides processively in the 3'- to 5'-direction. The protein is Polyribonucleotide nucleotidyltransferase of Variovorax paradoxus (strain S110).